The following is a 180-amino-acid chain: Putative manganese efflux pump MntP (180 aa).

Helical transmembrane passes span 4–24, 40–60, 64–84, 103–123, 129–149, and 156–176; these read FVTICIMAAALGMDAFSVALG, LTIGLFHVAMPLAGMAVGKWL, FDVIATYIGGGLLLVIGVQMA, LLLFAVGVSLDSFSAGLSFGI, FVTVGMIGAMSMVMSWIGLIV, and FLGAYGELLGGLVLIGFGLKI.

This sequence belongs to the MntP (TC 9.B.29) family.

It localises to the cell membrane. Functionally, probably functions as a manganese efflux pump. The protein is Putative manganese efflux pump MntP of Shouchella clausii (strain KSM-K16) (Alkalihalobacillus clausii).